Reading from the N-terminus, the 161-residue chain is NADH-quinone oxidoreductase subunit I (161 aa).

4Fe-4S ferredoxin-type domains lie at 52–82 and 92–121; these read LRRY…IEAK and TKYD…EGPN. Residues Cys-62, Cys-65, Cys-68, Cys-72, Cys-101, Cys-104, Cys-107, and Cys-111 each coordinate [4Fe-4S] cluster.

The protein belongs to the complex I 23 kDa subunit family. NDH-1 is composed of 14 different subunits. Subunits NuoA, H, J, K, L, M, N constitute the membrane sector of the complex. [4Fe-4S] cluster serves as cofactor.

The protein localises to the cell inner membrane. It catalyses the reaction a quinone + NADH + 5 H(+)(in) = a quinol + NAD(+) + 4 H(+)(out). NDH-1 shuttles electrons from NADH, via FMN and iron-sulfur (Fe-S) centers, to quinones in the respiratory chain. The immediate electron acceptor for the enzyme in this species is believed to be ubiquinone. Couples the redox reaction to proton translocation (for every two electrons transferred, four hydrogen ions are translocated across the cytoplasmic membrane), and thus conserves the redox energy in a proton gradient. The protein is NADH-quinone oxidoreductase subunit I of Orientia tsutsugamushi (strain Boryong) (Rickettsia tsutsugamushi).